The primary structure comprises 797 residues: Complex I intermediate-associated protein 84, mitochondrial (797 aa).

Residues 1–69 (MRSHLARNAT…ALCTRTSKRT (69 aa)) constitute a mitochondrion transit peptide.

It is found in the mitochondrion. Chaperone protein involved in the assembly of the mitochondrial NADH:ubiquinone oxidoreductase complex (complex I). This Neurospora crassa (strain ATCC 24698 / 74-OR23-1A / CBS 708.71 / DSM 1257 / FGSC 987) protein is Complex I intermediate-associated protein 84, mitochondrial (cia84).